The sequence spans 642 residues: Sec1 family domain-containing protein 1 (642 aa).

Alanine 2 carries the post-translational modification N-acetylalanine. A phosphoserine mark is found at serine 37, serine 303, and serine 528.

The protein belongs to the STXBP/unc-18/SEC1 family. In terms of assembly, interacts with STX17. Interacts with STX5A. Interacts with the COG complex via COG4.

The protein localises to the cytoplasm. Its subcellular location is the endoplasmic reticulum membrane. The protein resides in the golgi apparatus. It is found in the golgi stack membrane. Plays a role in SNARE-pin assembly and Golgi-to-ER retrograde transport via its interaction with COG4. Involved in vesicular transport between the endoplasmic reticulum and the Golgi. This chain is Sec1 family domain-containing protein 1 (SCFD1), found in Homo sapiens (Human).